A 239-amino-acid polypeptide reads, in one-letter code: Phosducin-like protein 2 (239 aa).

Residues 26-87 (TEDELFDLIK…IQQMKVEAEL (62 aa)) are a coiled coil. A Phosducin domain is found at 36–196 (EAAEMATEAE…TTVNDIEWQL (161 aa)). Basic and acidic residues predominate over residues 42-59 (TEAEKNEKLENASLKDLK). 2 disordered regions span residues 42 to 64 (TEAE…MEDD) and 212 to 239 (ITLA…DSDD). Residues 90–239 (FGELKEISEP…DESDNSDSDD (150 aa)) are thioredoxin fold. Basic residues predominate over residues 214 to 224 (LARKKSQKSRY). The span at 230-239 (DESDNSDSDD) shows a compositional bias: acidic residues.

Belongs to the phosducin family.

The polypeptide is Phosducin-like protein 2 (phlp2) (Dictyostelium discoideum (Social amoeba)).